Consider the following 110-residue polypeptide: uncharacterized protein (110 aa).

This is an uncharacterized protein from Autographa californica nuclear polyhedrosis virus (AcMNPV).